We begin with the raw amino-acid sequence, 141 residues long: Putative pre-16S rRNA nuclease (141 aa).

This sequence belongs to the YqgF nuclease family.

The protein resides in the cytoplasm. Could be a nuclease involved in processing of the 5'-end of pre-16S rRNA. This Chlorobium luteolum (strain DSM 273 / BCRC 81028 / 2530) (Pelodictyon luteolum) protein is Putative pre-16S rRNA nuclease.